The chain runs to 428 residues: Adenylosuccinate synthetase (428 aa).

GTP contacts are provided by residues 12–18 and 40–42; these read GDEGKGK and GHT. Catalysis depends on Asp13, which acts as the Proton acceptor. Mg(2+)-binding residues include Asp13 and Gly40. IMP-binding positions include 13–16, 38–41, Thr128, Arg142, Gln223, Thr238, and Arg302; these read DEGK and NAGH. Residue His41 is the Proton donor of the active site. Residue 298-304 coordinates substrate; it reads TTTGRPR. GTP contacts are provided by residues Arg304, 330 to 332, and 412 to 414; these read SID and SVG.

This sequence belongs to the adenylosuccinate synthetase family. In terms of assembly, homodimer. The cofactor is Mg(2+).

The protein resides in the cytoplasm. It carries out the reaction IMP + L-aspartate + GTP = N(6)-(1,2-dicarboxyethyl)-AMP + GDP + phosphate + 2 H(+). Its pathway is purine metabolism; AMP biosynthesis via de novo pathway; AMP from IMP: step 1/2. Functionally, plays an important role in the de novo pathway of purine nucleotide biosynthesis. Catalyzes the first committed step in the biosynthesis of AMP from IMP. The protein is Adenylosuccinate synthetase of Geobacillus sp. (strain WCH70).